Consider the following 190-residue polypeptide: Somatotropin (190 aa).

His-19 lines the Zn(2+) pocket. Cysteines 52 and 163 form a disulfide. Position 172 (Glu-172) interacts with Zn(2+). Cys-180 and Cys-188 are joined by a disulfide.

This sequence belongs to the somatotropin/prolactin family.

The protein localises to the secreted. Its function is as follows. Growth hormone plays an important role in growth control and involved in the regulation of several anabolic processes. This Crocodylus novaeguineae (Crocodile) protein is Somatotropin (GH).